The chain runs to 993 residues: ATP-dependent DNA helicase MPH1 (993 aa).

The Helicase ATP-binding domain maps to 94-261; it reads IVHKSLFQNT…EVVNNLDISK (168 aa). An ATP-binding site is contributed by 107-114; sequence IPTGMGKT. The DEAH box motif lies at 209–212; sequence DEAH. The region spanning 507–655 is the Helicase C-terminal domain; it reads KVERLHRQEQ…CIDYKKSDRI (149 aa). A disordered region spans residues 530 to 551; sequence NDKLERSARRTGSSEEAQISGM. Residues 539 to 551 are compositionally biased toward polar residues; it reads RTGSSEEAQISGM.

It belongs to the DEAD box helicase family. DEAH subfamily. FANCM sub-subfamily. Interacts with the MHF histone-fold complex to form the FANCM-MHF complex.

The protein resides in the nucleus. It catalyses the reaction ATP + H2O = ADP + phosphate + H(+). Its function is as follows. ATP-dependent DNA helicase involved in DNA damage repair by homologous recombination and in genome maintenance. Capable of unwinding D-loops. Plays a role in limiting crossover recombinants during mitotic DNA double-strand break (DSB) repair. Component of a FANCM-MHF complex which promotes gene conversion at blocked replication forks, probably by reversal of the stalled fork. The sequence is that of ATP-dependent DNA helicase MPH1 from Saccharomyces cerevisiae (strain YJM789) (Baker's yeast).